The primary structure comprises 838 residues: Semaphorin-4G (838 aa).

The first 17 residues, 1-17, serve as a signal peptide directing secretion; the sequence is MWGRLWPLLLSILTATA. Topologically, residues 18-675 are extracellular; that stretch reads VPGPSLRRPS…GAQLAPDVRL (658 aa). The Sema domain maps to 35 to 505; that stretch reads RMTIPYEELS…APSGVIQLPL (471 aa). N-linked (GlcNAc...) asparagine glycosylation is found at Asn55, Asn111, and Asn126. Cys104 and Cys115 are oxidised to a cystine. 3 cysteine pairs are disulfide-bonded: Cys133-Cys142, Cys270-Cys377, and Cys294-Cys337. Asn388 carries N-linked (GlcNAc...) asparagine glycosylation. The PSI domain maps to 507–558; sequence SCSRYRSCYDCILARDPYCGWDPGTHACAAATTIANRTALIQDIERGNRGCE. 2 disulfides stabilise this stretch: Cys508-Cys525 and Cys517-Cys534. Asn542 and Asn598 each carry an N-linked (GlcNAc...) asparagine glycan. The region spanning 567–649 is the Ig-like C2-type domain; it reads PPLKTRSVLR…RTLLASYSLT (83 aa). Cys584 and Cys632 are disulfide-bonded. A helical transmembrane segment spans residues 676–696; that stretch reads LYVLAIAALGGLCLILASSLL. Residues 697–838 are Cytoplasmic-facing; it reads YVACLREGRR…LVEQLDESSV (142 aa). The interval 723 to 777 is disordered; sequence SAVQLQTVSGQCPGEEDEGDDEGAGGLEGSCLQIIPGEGAPAPPPPPPPPPPAEL. Positions 736–745 are enriched in acidic residues; the sequence is GEEDEGDDEG. The segment covering 763 to 775 has biased composition (pro residues); that stretch reads PAPPPPPPPPPPA. Ser795 and Ser837 each carry phosphoserine.

Belongs to the semaphorin family. Interacts with PLXNB2.

The protein localises to the cell membrane. Functionally, cell surface receptor for PLXNB2. May play a role in axon guidance. The polypeptide is Semaphorin-4G (SEMA4G) (Homo sapiens (Human)).